Consider the following 632-residue polypeptide: Phosphomethylpyrimidine synthase (632 aa).

Substrate contacts are provided by residues N237, M266, Y295, H331, 351 to 353 (SRG), 392 to 395 (DGLR), and E431. H435 is a binding site for Zn(2+). Substrate is bound at residue Y458. Residue H499 participates in Zn(2+) binding. Residues C579, C582, and C587 each coordinate [4Fe-4S] cluster.

This sequence belongs to the ThiC family. Homodimer. [4Fe-4S] cluster is required as a cofactor.

It carries out the reaction 5-amino-1-(5-phospho-beta-D-ribosyl)imidazole + S-adenosyl-L-methionine = 4-amino-2-methyl-5-(phosphooxymethyl)pyrimidine + CO + 5'-deoxyadenosine + formate + L-methionine + 3 H(+). It participates in cofactor biosynthesis; thiamine diphosphate biosynthesis. Catalyzes the synthesis of the hydroxymethylpyrimidine phosphate (HMP-P) moiety of thiamine from aminoimidazole ribotide (AIR) in a radical S-adenosyl-L-methionine (SAM)-dependent reaction. The chain is Phosphomethylpyrimidine synthase from Nitrosomonas eutropha (strain DSM 101675 / C91 / Nm57).